A 128-amino-acid polypeptide reads, in one-letter code: Tachykinin-4 (128 aa).

An N-terminal signal peptide occupies residues 1-16 (MLPLLALLLLIGPSVC). Positions 17–54 (TTAGDREELAFGAEAESWVTVNLKGIPVPSIELKLQEL) are excised as a propeptide. Position 66 is a methionine amide (methionine 66). Residues 69–128 (RVGGYQLGRIVQDLLGTRGLSIEGTCRQAASQQRARPGAVTRESLQSREEDEAPLTTSNV) constitute a propeptide that is removed on maturation. A disordered region spans residues 96 to 128 (QAASQQRARPGAVTRESLQSREEDEAPLTTSNV).

The protein belongs to the tachykinin family. Expressed in hematopoietic cells with highest levels in pre- and pro-B cells but not in later developmental stages. Also detected in uterus, skeletal muscle, brain, spleen, stomach, skin and lactating mammary gland and in cells of myeloid lineage including dendritic and microglial cells and macrophages. In uterus, highest expression is observed in non-pregnant diestrus mice and in day 5 pregnant mice. Compared with mice in diestrus, decreases 2.6-fold in uteri from non-pregnant mice in estrus and 10.2-fold in day 17 pregnant mice. Detected at sites of chronic inflammation such as granulomas.

The protein localises to the secreted. In terms of biological role, tachykinins are active peptides which excite neurons, evoke behavioral responses, are potent vasodilators and secretagogues, and contract (directly or indirectly) many smooth muscles. Hemokinin induces plasma extravasation, mast cell degranulation, muscle contraction, salivary secretion and scratching behavior. Increases sperm motility. Induces potent analgesic effects and may play a role in pain modulation. Promotes survival of bone marrow B lineage cells and of cultured LPS-stimulated pre-B cells and may act as an autocrine factor required for B-cell survival and proliferation. Lowers systemic arterial pressure following intravenous injection. Induces interferon-gamma production and may play a role in the inflammatory response. Shows potent affinity and specificity for the NK-1 receptor. The polypeptide is Tachykinin-4 (Mus musculus (Mouse)).